The chain runs to 347 residues: UDP-N-acetylenolpyruvoylglucosamine reductase (347 aa).

Residues 33–221 (AGGSAERIYL…SGAWFALPRD (189 aa)) form the FAD-binding PCMH-type domain. The active site involves Arg180. The Proton donor role is filled by Ser250. The active site involves Glu320.

It belongs to the MurB family. FAD serves as cofactor.

It is found in the cytoplasm. The enzyme catalyses UDP-N-acetyl-alpha-D-muramate + NADP(+) = UDP-N-acetyl-3-O-(1-carboxyvinyl)-alpha-D-glucosamine + NADPH + H(+). It functions in the pathway cell wall biogenesis; peptidoglycan biosynthesis. Its function is as follows. Cell wall formation. This is UDP-N-acetylenolpyruvoylglucosamine reductase from Nitrosospira multiformis (strain ATCC 25196 / NCIMB 11849 / C 71).